Reading from the N-terminus, the 659-residue chain is MRIGVDYYPEHWDRQLWEKDAQLMKEIGVKVVRLAEFAWCKLEPIEGQYDFKWLDDVIEIFSVRNIEIVLGTPTNTPPLWLYEKYPDAIQVNESGERQFIGIRGHRCYNSSSMRKYTKAIVEAMTERYANNKAVIGWQIDNELDATHCCCDNCTEKFRGWLKNKYSTLENINKEYGNVVWSGEYSAWSQVTAPLGGSPFLNPSYLLDYNRFASDSMVEYIDFQREIIRKNCPSQFITTNTWFTGNLPNFYDAFENLDFVSYDNYPTTNEITDEEELHSHAFHCDLMRGIKKKNFWIMEQLSGTPGCWMPMQRTPKPGMIKGYSFQAIGRGAETVVHFRWRNAIIGAEMFWHGILDHSNVKGRRFYEFAELCREVNKINEEIPDYKINNEVAILYSSDQDFAFKIQPQVEGLYYLQQLKAFHNALIRLGVGTDIINWSESLNKYKVVIAPTLYLTDDNVTTELYRFVEAGGTLILTNRTGVKNMNNVCLMEQMPSNLKECAGVVVKEYDPIGHSIHTIKDEAGKVYQCKQWCDILEPTTAKVIATYNDDFYIDEAAVTVNKYKKGNVYYLGTVFNSDYYIELLSKILDEKELPYYKKLPYGLELSVLENENGKYLMVFNNSNEIKCFEGKHEGKSIIRNELDGKSFTLEPYGIEVLQLVE.

Residue Arg103 participates in substrate binding. Position 107 (Cys107) interacts with Zn(2+). Residue Asn141 participates in substrate binding. Glu142 (proton donor) is an active-site residue. Positions 148, 150, and 153 each coordinate Zn(2+). Glu298 serves as the catalytic Nucleophile. Position 307 (Trp307) interacts with substrate.

This sequence belongs to the glycosyl hydrolase 42 family. As to quaternary structure, dimer.

It carries out the reaction Hydrolysis of terminal non-reducing beta-D-galactose residues in beta-D-galactosides.. With respect to regulation, inhibited by Cu(2+), Hg(2+) and Zn(2+). No effect with Ca(2+), Mg(2+), Mn(2+) or excess EDTA (10 mM). Involved in plant cell wall degradation in cooperation with cellulosome. Hydrolyzes both p-nitrophenyl-alpha-L-arabinopyranoside (pNPAp) and p-nitrophenyl-beta-D-galactopyranoside (pNPGp), with higher activity for pNPAp. Shows hydrolysis activity against p-nitrophenyl-beta-D-fucopyranoside (pNPFp), but not against p-nitrophenyl-alpha-L-arabinofuranoside (pNPAf), o-nitrophenyl-beta-D-galactopyranoside (oNPGp), p-nitrophenyl-beta-D-xylopyranoside (pNPXp), p-nitrophenyl-beta-D-glucopyranoside (pNPGLp), p-nitrophenyl-beta-D-cellobiopyranoside (pNPCp), p-nitrophenyl-beta-lactopyranoside (pNPLp) or p-nitrophenyl-alpha-galactopyranoside (pNPalphaGp). No detectable activity against arabinan or arabinoxylan, but activity against arabinogalactan can be detected. Increases degradation activity of alpha-L-arabinofuranosidase (ArfA) and endo-1,4-beta-xylanase (XynA) when corn fiber gum and corn stem powder are used as substrates. This Clostridium cellulovorans (strain ATCC 35296 / DSM 3052 / OCM 3 / 743B) protein is Beta-galactosidase BgaA (bgaA).